The chain runs to 682 residues: Guanylate cyclase soluble subunit beta-2 (682 aa).

His43 serves as a coordination point for heme. The Guanylate cyclase domain occupies 408–536 (TILFSDVVTF…DTVNTASRME (129 aa)). Residues 592–667 (MGRPSAPADG…QPSPDETKTS (76 aa)) are disordered. Polar residues predominate over residues 649-667 (RNSTDAVNNQPSPDETKTS).

This sequence belongs to the adenylyl cyclase class-4/guanylyl cyclase family. In terms of assembly, heterodimer of an alpha and a beta chain. Heme is required as a cofactor. Kidney and liver.

The protein localises to the cytoplasm. The catalysed reaction is GTP = 3',5'-cyclic GMP + diphosphate. Activated by nitric oxide in the presence of magnesium or manganese ions. In Rattus norvegicus (Rat), this protein is Guanylate cyclase soluble subunit beta-2 (Gucy1b2).